The sequence spans 434 residues: Enolase (434 aa).

Residue glutamine 165 coordinates (2R)-2-phosphoglycerate. Glutamate 207 (proton donor) is an active-site residue. 3 residues coordinate Mg(2+): aspartate 244, glutamate 291, and aspartate 318. Residues lysine 343, arginine 372, serine 373, and lysine 394 each contribute to the (2R)-2-phosphoglycerate site. Lysine 343 acts as the Proton acceptor in catalysis.

Belongs to the enolase family. Requires Mg(2+) as cofactor.

It localises to the cytoplasm. The protein resides in the secreted. It is found in the cell surface. It carries out the reaction (2R)-2-phosphoglycerate = phosphoenolpyruvate + H2O. It functions in the pathway carbohydrate degradation; glycolysis; pyruvate from D-glyceraldehyde 3-phosphate: step 4/5. Catalyzes the reversible conversion of 2-phosphoglycerate (2-PG) into phosphoenolpyruvate (PEP). It is essential for the degradation of carbohydrates via glycolysis. This Staphylococcus epidermidis (strain ATCC 35984 / DSM 28319 / BCRC 17069 / CCUG 31568 / BM 3577 / RP62A) protein is Enolase.